The sequence spans 183 residues: Adenine phosphoribosyltransferase (183 aa).

Belongs to the purine/pyrimidine phosphoribosyltransferase family. As to quaternary structure, homodimer.

The protein localises to the cytoplasm. It catalyses the reaction AMP + diphosphate = 5-phospho-alpha-D-ribose 1-diphosphate + adenine. The protein operates within purine metabolism; AMP biosynthesis via salvage pathway; AMP from adenine: step 1/1. In terms of biological role, catalyzes a salvage reaction resulting in the formation of AMP, that is energically less costly than de novo synthesis. The chain is Adenine phosphoribosyltransferase from Proteus mirabilis (strain HI4320).